Reading from the N-terminus, the 387-residue chain is Zinc finger protein neuro-d4 (387 aa).

Glycyl lysine isopeptide (Lys-Gly) (interchain with G-Cter in SUMO2) cross-links involve residues lysine 106, lysine 129, and lysine 133. The segment at tyrosine 195–histidine 218 adopts a C2H2-type zinc-finger fold. 2 consecutive PHD-type zinc fingers follow at residues asparagine 271 to cysteine 328 and cysteine 325 to histidine 375. Zn(2+) is bound by residues cysteine 274, cysteine 277, cysteine 293, cysteine 296, histidine 301, cysteine 304, cysteine 322, cysteine 325, cysteine 328, cysteine 331, cysteine 343, cysteine 346, histidine 351, cysteine 354, cysteine 369, and cysteine 372.

Belongs to the requiem/DPF family. As to quaternary structure, component of neuron-specific chromatin remodeling complex (nBAF complex) composed of at least, ARID1A/BAF250A or ARID1B/BAF250B, SMARCD1/BAF60A, SMARCD3/BAF60C, SMARCA2/BRM/BAF190B, SMARCA4/BRG1/BAF190A, SMARCB1/BAF47, SMARCC1/BAF155, SMARCE1/BAF57, SMARCC2/BAF170, DPF1/BAF45B, DPF3/BAF45C, ACTL6B/BAF53B and actin.

The protein resides in the cytoplasm. The protein localises to the nucleus. Its function is as follows. May have an important role in developing neurons by participating in regulation of cell survival, possibly as a neurospecific transcription factor. Belongs to the neuron-specific chromatin remodeling complex (nBAF complex). During neural development a switch from a stem/progenitor to a postmitotic chromatin remodeling mechanism occurs as neurons exit the cell cycle and become committed to their adult state. The transition from proliferating neural stem/progenitor cells to postmitotic neurons requires a switch in subunit composition of the npBAF and nBAF complexes. As neural progenitors exit mitosis and differentiate into neurons, npBAF complexes which contain ACTL6A/BAF53A and PHF10/BAF45A, are exchanged for homologous alternative ACTL6B/BAF53B and DPF1/BAF45B or DPF3/BAF45C subunits in neuron-specific complexes (nBAF). The npBAF complex is essential for the self-renewal/proliferative capacity of the multipotent neural stem cells. The nBAF complex along with CREST plays a role regulating the activity of genes essential for dendrite growth. The chain is Zinc finger protein neuro-d4 from Homo sapiens (Human).